We begin with the raw amino-acid sequence, 346 residues long: Dihydroorotase (346 aa).

Zn(2+)-binding residues include His-13 and His-15. Substrate is bound by residues 15–17 and Asn-41; that span reads HLR. The Zn(2+) site is built by Lys-99, His-136, and His-174. Lys-99 is modified (N6-carboxylysine). A substrate-binding site is contributed by His-136. Residue Leu-219 coordinates substrate. Asp-247 is a binding site for Zn(2+). Asp-247 is an active-site residue. Residues His-251 and Ala-263 each coordinate substrate.

Belongs to the metallo-dependent hydrolases superfamily. DHOase family. Class II DHOase subfamily. Homodimer. Requires Zn(2+) as cofactor.

It catalyses the reaction (S)-dihydroorotate + H2O = N-carbamoyl-L-aspartate + H(+). Its pathway is pyrimidine metabolism; UMP biosynthesis via de novo pathway; (S)-dihydroorotate from bicarbonate: step 3/3. Functionally, catalyzes the reversible cyclization of carbamoyl aspartate to dihydroorotate. The polypeptide is Dihydroorotase (Rhizobium rhizogenes (strain K84 / ATCC BAA-868) (Agrobacterium radiobacter)).